Consider the following 249-residue polypeptide: Acidic leucine-rich nuclear phosphoprotein 32 family member A (249 aa).

A Phosphothreonine modification is found at T15. A Phosphoserine modification is found at S17. LRR repeat units lie at residues 18-41 (DVKELVLDNCRSIEGKIEGLTDEF), 43-64 (ELEFLSTINVGLTSVANLPKLN), 65-87 (KLKKLELSDNRISGGLEVLAEKC), and 89-110 (NLTHLNLSGNKIKDLSTIEPLK). The LRRCT domain maps to 123–161 (CEVTNLNDYRENVFKLLPQLTYLDGYDRDDKEAPDSDAE). Positions 147–156 (GYDRDDKEAP) are enriched in basic and acidic residues. The disordered stretch occupies residues 147-249 (GYDRDDKEAP…EPXDXGEDDD (103 aa)). Residues 150-174 (RDDKEAPDSDAEGYVEGLDDDEEDE) form a necessary for tumor-suppressive function region. The segment covering 157–230 (DSDAEGYVEG…DEEDEEDVGE (74 aa)) has biased composition (acidic residues). A phosphoserine mark is found at S158 and S204. Positions 165–249 (EGLDDDEEDE…EPXDXGEDDD (85 aa)) are interaction with E4F1.

The protein belongs to the ANP32 family. Component of the SET complex, composed of at least ANP32A, APEX1, HMGB2, NME1, SET and TREX1. Directly interacts with SET. Interacts with ATXN1/SCA1. Interacts with MAP1B. Interacts with ELAVL1. Part of the INHAT (inhibitor of histone acetyltransferases) complex. Interacts with E4F1. In terms of processing, phosphorylated on serine residues, at least in part by casein kinase 2/CK2. Post-translationally, some glutamate residues are glycylated by TTLL8. This modification occurs exclusively on glutamate residues and results in a glycine chain on the gamma-carboxyl group.

Its subcellular location is the nucleus. It localises to the cytoplasm. It is found in the endoplasmic reticulum. Its function is as follows. Multifunctional protein that is involved in the regulation of many processes including tumor suppression, apoptosis, cell cycle progression or transcription. Promotes apoptosis by favouring the activation of caspase-9/CASP9 and allowing apoptosome formation. In addition, plays a role in the modulation of histone acetylation and transcription as part of the INHAT (inhibitor of histone acetyltransferases) complex. Inhibits the histone-acetyltranferase activity of EP300/CREBBP (CREB-binding protein) and EP300/CREBBP-associated factor by histone masking. Preferentially binds to unmodified histone H3 and sterically inhibiting its acetylation and phosphorylation leading to cell growth inhibition. Participates in other biochemical processes such as regulation of mRNA nuclear-to-cytoplasmic translocation and stability by its association with ELAVL1 (Hu-antigen R). Plays a role in E4F1-mediated transcriptional repression as well as inhibition of protein phosphatase 2A. This is Acidic leucine-rich nuclear phosphoprotein 32 family member A (ANP32A) from Canis lupus familiaris (Dog).